The sequence spans 363 residues: tRNA-specific 2-thiouridylase MnmA (363 aa).

ATP-binding positions include 8-15 (AMSGGVDS) and Leu-34. Cys-103 functions as the Nucleophile in the catalytic mechanism. The cysteines at positions 103 and 195 are disulfide-linked. Gly-127 is an ATP binding site. The segment at 145–147 (KDQ) is interaction with tRNA. The active-site Cysteine persulfide intermediate is Cys-195.

Belongs to the MnmA/TRMU family.

Its subcellular location is the cytoplasm. The catalysed reaction is S-sulfanyl-L-cysteinyl-[protein] + uridine(34) in tRNA + AH2 + ATP = 2-thiouridine(34) in tRNA + L-cysteinyl-[protein] + A + AMP + diphosphate + H(+). Functionally, catalyzes the 2-thiolation of uridine at the wobble position (U34) of tRNA, leading to the formation of s(2)U34. This is tRNA-specific 2-thiouridylase MnmA from Thermobifida fusca (strain YX).